The primary structure comprises 353 residues: Paraneoplastic antigen Ma1 homolog (353 aa).

It belongs to the PNMA family. In terms of tissue distribution, testis and brain specific.

The protein localises to the nucleus. Its subcellular location is the nucleolus. The sequence is that of Paraneoplastic antigen Ma1 homolog (Pnma1) from Rattus norvegicus (Rat).